The following is a 294-amino-acid chain: Secreted frizzled-related protein 2 (294 aa).

Residues 1 to 24 (MPRGPGSLLLLVLASHCCLGSARG) form the signal peptide. Residues 34 to 154 (YKRSNCKPIP…PQDNDLCIPL (121 aa)) enclose the FZ domain. Intrachain disulfides connect Cys39–Cys102, Cys49–Cys95, Cys86–Cys124, Cys113–Cys151, Cys117–Cys141, Cys171–Cys244, Cys174–Cys246, and Cys189–Cys294. The region spanning 171-294 (CEACKNKNED…ISRSIRKLQC (124 aa)) is the NTR domain.

This sequence belongs to the secreted frizzled-related protein (sFRP) family.

The protein resides in the secreted. Functionally, soluble frizzled-related proteins (sFRPS) function as modulators of Wnt signaling through direct interaction with Wnts. They have a role in regulating cell growth and differentiation in specific cell types. SFRP2 may be important for eye retinal development and for myogenesis. This Canis lupus familiaris (Dog) protein is Secreted frizzled-related protein 2 (SFRP2).